Here is a 201-residue protein sequence, read N- to C-terminus: MAWMLLLILIMVHPGSCALWVSQPPEIRTLEGSSAFLPCSFNASQGRLAIGSVTWFRDEVVPGKEVRNGTPEFRGRLAPLASSRFLHDHQAELHIRDVRGHDASIYVCRVEVLGLGVGTGNGTRLVVEKEHPQLGAGTVLLLRAGFYAVSFLSVAVGSTVYYQGKCLTWKGPRRQLPAVVPAPLPPPCGSSAHLLPPVPGG.

An N-terminal signal peptide occupies residues 1–18; it reads MAWMLLLILIMVHPGSCA. The region spanning 19–126 is the Ig-like domain; it reads LWVSQPPEIR…VGTGNGTRLV (108 aa). The Extracellular portion of the chain corresponds to 19–135; sequence LWVSQPPEIR…VVEKEHPQLG (117 aa). C39 and C108 form a disulfide bridge. Residues N42 and N121 are each glycosylated (N-linked (GlcNAc...) asparagine). The helical transmembrane segment at 136-156 threads the bilayer; the sequence is AGTVLLLRAGFYAVSFLSVAV. Topologically, residues 157–201 are cytoplasmic; sequence GSTVYYQGKCLTWKGPRRQLPAVVPAPLPPPCGSSAHLLPPVPGG.

This sequence belongs to the natural cytotoxicity receptor (NCR) family. Homodimer in the unliganted form. Interacts with CD3Z. Interacts with and is activated by binding to NCR3LG1. Interacts with and is activated by binding to BAG6. Interacts with and is inhibited by binding to LGALS3. Selectively expressed by all resting and activated NK cells and weakly expressed in spleen.

It is found in the cell membrane. Functionally, cell membrane receptor of natural killer/NK cells that is activated by binding of extracellular ligands including BAG6 and NCR3LG1. Stimulates NK cells cytotoxicity toward neighboring cells producing these ligands. It controls, for instance, NK cells cytotoxicity against tumor cells. Engagement of NCR3 by BAG6 also promotes myeloid dendritic cells (DC) maturation, both through killing DCs that did not acquire a mature phenotype, and inducing the release by NK cells of TNFA and IFNG which promote DC maturation. In Homo sapiens (Human), this protein is Natural cytotoxicity triggering receptor 3.